The sequence spans 334 residues: Phosphate acyltransferase (334 aa).

It belongs to the PlsX family. In terms of assembly, homodimer. Probably interacts with PlsY.

Its subcellular location is the cytoplasm. It catalyses the reaction a fatty acyl-[ACP] + phosphate = an acyl phosphate + holo-[ACP]. It functions in the pathway lipid metabolism; phospholipid metabolism. In terms of biological role, catalyzes the reversible formation of acyl-phosphate (acyl-PO(4)) from acyl-[acyl-carrier-protein] (acyl-ACP). This enzyme utilizes acyl-ACP as fatty acyl donor, but not acyl-CoA. This is Phosphate acyltransferase from Clostridium tetani (strain Massachusetts / E88).